The primary structure comprises 201 residues: Large ribosomal subunit protein uL4 (201 aa).

The disordered stretch occupies residues 44–71 (RAQKTRAEVTGSGKKPWRQKGTGRARSG).

This sequence belongs to the universal ribosomal protein uL4 family. Part of the 50S ribosomal subunit.

One of the primary rRNA binding proteins, this protein initially binds near the 5'-end of the 23S rRNA. It is important during the early stages of 50S assembly. It makes multiple contacts with different domains of the 23S rRNA in the assembled 50S subunit and ribosome. Its function is as follows. Forms part of the polypeptide exit tunnel. The polypeptide is Large ribosomal subunit protein uL4 (Edwardsiella ictaluri (strain 93-146)).